Here is a 475-residue protein sequence, read N- to C-terminus: Endoglucanase A (475 aa).

An N-terminal signal peptide occupies residues 1 to 26; the sequence is MKKTTAFLLCFLMIFTALLPMQNANA. His-147 is an active-site residue. Glu-195 (proton donor) is an active-site residue. The active-site Nucleophile is Glu-332. Residues 409-474 enclose the Dockerin domain; the sequence is PVIVYGDYNN…LLGMVSKLPS (66 aa).

It belongs to the glycosyl hydrolase 5 (cellulase A) family.

The catalysed reaction is Endohydrolysis of (1-&gt;4)-beta-D-glucosidic linkages in cellulose, lichenin and cereal beta-D-glucans.. Functionally, the biological conversion of cellulose to glucose generally requires three types of hydrolytic enzymes: (1) Endoglucanases which cut internal beta-1,4-glucosidic bonds; (2) Exocellobiohydrolases that cut the disaccharide cellobiose from the non-reducing end of the cellulose polymer chain; (3) Beta-1,4-glucosidases which hydrolyze the cellobiose and other short cello-oligosaccharides to glucose. The protein is Endoglucanase A (celCCA) of Ruminiclostridium cellulolyticum (strain ATCC 35319 / DSM 5812 / JCM 6584 / H10) (Clostridium cellulolyticum).